The primary structure comprises 81 residues: Sulfur carrier protein TusA (81 aa).

Residue cysteine 19 is the Cysteine persulfide intermediate of the active site.

The protein belongs to the sulfur carrier protein TusA family.

It localises to the cytoplasm. Its function is as follows. Sulfur carrier protein which probably makes part of a sulfur-relay system. This Shewanella sp. (strain MR-4) protein is Sulfur carrier protein TusA.